Here is a 146-residue protein sequence, read N- to C-terminus: Decarboxylase dmxR15 (146 aa).

The EthD domain occupies 31–126 (PGMSEGDYRN…MHDHEVFADT (96 aa)).

Belongs to the tpcK family.

It catalyses the reaction atrochrysone carboxylate + H(+) = atrochrysone + CO2. It functions in the pathway secondary metabolite biosynthesis. Decarboxylase; part of the gene cluster that mediates the biosynthesis of the dimeric xanthones cryptosporioptides. The pathway begins with the synthesis of atrochrysone thioester by the polyketide synthase dmx-nrPKS. The atrochrysone carboxyl ACP thioesterase dmxR1 then breaks the thioester bond and releases the atrochrysone carboxylic acid from dmx-nrPKS. Atrochrysone carboxylic acid is decarboxylated by the decarboxylase dmxR15, and oxidized by the anthrone oxygenase dmxR16 to yield emodin. Emodin is then reduced to emodin hydroquinone by the oxidoreductase dmxR7. A-ring reduction by the short chain dehydrogenase dmxR18, dehydration by the scytalone dehydratase-like protein dmxR17 and probable spontaneous re-oxidation, results in overall deoxygenation to chrysophanol. Baeyer-Villiger oxidation by the Baeyer-Villiger monooxygenase (BVMO) dmxR6 then yields monodictylactone in equilibrium with monodictyphenone. In the case of the cryptosporioptides biosynthesis, monodictylactone is reduced at C-12 to an alcohol (by the short chain dehydrogenases dmxR12 or dmxR8) and hydroxylated at C-5 by dmxR9, yielding the electron-rich aromatic which could eliminate H(2)O to form the ortho-quinonemethide, followed by tautomerisation to paraquinone and complete the formal reduction to produce the 10-methylgroup. Conjugate addition of C-4a-OH to the resulting paraquinone by the monooxygenase dmxR10 then gives cyclohexadienone, which is then reduced at C-5 by the short chain dehydrogenase dmxR3 to give the dihydroxanthone. The 6,7-epoxide in the cryptosporioptides could be introduced by the cytochrome P450 monooxygenase dmxL3. The highly reducing PKS dmxL2 manufactures butyrate, which is further carboxylated by dmxL1 to form ethylmalonate. It is not yet clear whether the carboxylation occurs while the butyrate is attached to the ACP of dmxL2, but this unusual fungal metabolite could then be esterified to O-5 by the O-acetyltransferase dmxR13. Finally, dimerization performed by dmxR5 gives the observed dimers cryptosporioptides A, B and C as the final products of the pathway. This chain is Decarboxylase dmxR15, found in Cryptosporiopsis sp. (strain 8999).